The primary structure comprises 277 residues: Shikimate dehydrogenase (NADP(+)) (277 aa).

Residues 15–17 and Thr62 each bind shikimate; that span reads SLS. The Proton acceptor role is filled by Lys66. Shikimate contacts are provided by Asn87 and Asp102. NADP(+) contacts are provided by residues 127-131, 151-156, and Ile219; these read GAGGA and NRTVDK. Tyr221 is a binding site for shikimate. An NADP(+)-binding site is contributed by Gly242.

Belongs to the shikimate dehydrogenase family. In terms of assembly, homodimer.

The catalysed reaction is shikimate + NADP(+) = 3-dehydroshikimate + NADPH + H(+). It functions in the pathway metabolic intermediate biosynthesis; chorismate biosynthesis; chorismate from D-erythrose 4-phosphate and phosphoenolpyruvate: step 4/7. Functionally, involved in the biosynthesis of the chorismate, which leads to the biosynthesis of aromatic amino acids. Catalyzes the reversible NADPH linked reduction of 3-dehydroshikimate (DHSA) to yield shikimate (SA). This is Shikimate dehydrogenase (NADP(+)) from Bacillus cereus (strain AH820).